The following is a 327-amino-acid chain: Ornithine carbamoyltransferase 2, anabolic (327 aa).

Carbamoyl phosphate contacts are provided by residues R109 and H136 to Q139. L-ornithine contacts are provided by residues N168, D232, and S236–M237. Residues C273–L274 and R313 each bind carbamoyl phosphate.

This sequence belongs to the aspartate/ornithine carbamoyltransferase superfamily. OTCase family. As to quaternary structure, homotrimer.

It is found in the cytoplasm. The enzyme catalyses carbamoyl phosphate + L-ornithine = L-citrulline + phosphate + H(+). It functions in the pathway amino-acid biosynthesis; L-arginine biosynthesis; L-arginine from L-ornithine and carbamoyl phosphate: step 1/3. In terms of biological role, plays an important role in the survival and pathogenicity of P.syringae. Phaseolotoxin is a virulence factor that inhibits the catalysis of the host OTCase. Phaseolotoxin-producing bacteria do not suffer autointoxication because they possess the anabolic OTCase ArgK which can function even in the presence of phaseolotoxin. Reversibly catalyzes the transfer of the carbamoyl group from carbamoyl phosphate (CP) to the N(epsilon) atom of ornithine (ORN) to produce L-citrulline, which is a substrate for argininosuccinate synthetase, the enzyme involved in the final step in arginine biosynthesis. This Pseudomonas savastanoi pv. phaseolicola (Pseudomonas syringae pv. phaseolicola) protein is Ornithine carbamoyltransferase 2, anabolic.